We begin with the raw amino-acid sequence, 469 residues long: Cysteine protease ATG4D (469 aa).

A compositionally biased stretch (polar residues) spans 1 to 29; the sequence is MNSVSPLATQYGSPKGSQQMENRSTQSGG. Residues 1–41 are disordered; it reads MNSVSPLATQYGSPKGSQQMENRSTQSGGHEQRKMGHQDAT. The Nucleophile role is filled by Cys-131. The segment at 169–191 is disordered; sequence IRSSSPPSMPLSSLATGHSAGDY. The segment covering 171-182 has biased composition (low complexity); sequence SSSPPSMPLSSL. Catalysis depends on residues Asp-356 and His-358. Residues 436 to 469 form a disordered region; the sequence is QEYAEGPQSSSHPPVCRKKGPLVKRPSSDEFEFL.

It belongs to the peptidase C54 family.

It localises to the cytoplasm. The enzyme catalyses [protein]-C-terminal L-amino acid-glycyl-phosphatidylethanolamide + H2O = [protein]-C-terminal L-amino acid-glycine + a 1,2-diacyl-sn-glycero-3-phosphoethanolamine. It carries out the reaction [protein]-C-terminal L-amino acid-glycyl-phosphatidylserine + H2O = [protein]-C-terminal L-amino acid-glycine + a 1,2-diacyl-sn-glycero-3-phospho-L-serine. Functionally, cysteine protease that plays a key role in autophagy by mediating both proteolytic activation and delipidation of ATG8 family proteins. The protease activity is required for proteolytic activation of ATG8 family proteins to reveal a C-terminal glycine. Exposure of the glycine at the C-terminus is essential for ATG8 proteins conjugation to phosphatidylethanolamine (PE) and insertion to membranes, which is necessary for autophagy. In addition to the protease activity, also mediates delipidation of ATG8 family proteins. Catalyzes delipidation of PE-conjugated forms of ATG8 proteins during macroautophagy. Also involved in non-canonical autophagy, a parallel pathway involving conjugation of ATG8 proteins to single membranes at endolysosomal compartments, by catalyzing delipidation of ATG8 proteins conjugated to phosphatidylserine (PS). The sequence is that of Cysteine protease ATG4D from Xenopus laevis (African clawed frog).